Reading from the N-terminus, the 574-residue chain is Efflux pump FUB11 (574 aa).

Residues 1–44 are disordered; the sequence is MAIDPQPSSPSLSSETIANDTIGNDNNVNEPSVEPKTQEHQHTV. Positions 9 to 30 are enriched in polar residues; it reads SPSLSSETIANDTIGNDNNVNE. Asn19 carries an N-linked (GlcNAc...) asparagine glycan. A run of 11 helical transmembrane segments spans residues 116 to 136, 148 to 168, 176 to 196, 208 to 228, 235 to 255, 318 to 338, 348 to 368, 394 to 414, 419 to 439, 449 to 469, and 484 to 504; these read VATL…LIWA, FFFT…AGSI, FLTG…IADM, MFSG…GFLG, WLHG…TVFI, IYIS…PIVF, IGGL…ISFA, AIMG…TTFA, IVPI…FMAL, IFAA…GAAF, and WASS…FLFY. The tract at residues 552–574 is disordered; sequence HNSHTSATHSHGHRRSLSCTRSV.

The protein belongs to the major facilitator superfamily. DHA1 family. Polyamines/proton antiporter (TC 2.A.1.2.16) subfamily.

It localises to the cell membrane. Functionally, efflux pump involved in export of fusaric acid, a mycotoxin with low to moderate toxicity to animals and humans, but with high phytotoxic properties. Constitutes a self-protecting mechanism of the fungus against critical levels of fusaric acid within the cell. The sequence is that of Efflux pump FUB11 from Gibberella fujikuroi (strain CBS 195.34 / IMI 58289 / NRRL A-6831) (Bakanae and foot rot disease fungus).